The sequence spans 198 residues: Transcription factor FapR (198 aa).

In terms of domain architecture, MaoC-like spans 102–169 (NRIARGHHLF…RTIVEVNSYV (68 aa)).

Belongs to the FapR family.

Functionally, transcriptional factor involved in regulation of membrane lipid biosynthesis by repressing genes involved in fatty acid and phospholipid metabolism. This Geobacillus sp. (strain WCH70) protein is Transcription factor FapR.